The following is a 420-amino-acid chain: Glucose-1-phosphate adenylyltransferase (420 aa).

Alpha-D-glucose 1-phosphate contacts are provided by residues tyrosine 107, glycine 172, 187-188 (EK), and serine 205.

It belongs to the bacterial/plant glucose-1-phosphate adenylyltransferase family. In terms of assembly, homotetramer.

The catalysed reaction is alpha-D-glucose 1-phosphate + ATP + H(+) = ADP-alpha-D-glucose + diphosphate. It functions in the pathway glycan biosynthesis; glycogen biosynthesis. Involved in the biosynthesis of ADP-glucose, a building block required for the elongation reactions to produce glycogen. Catalyzes the reaction between ATP and alpha-D-glucose 1-phosphate (G1P) to produce pyrophosphate and ADP-Glc. This chain is Glucose-1-phosphate adenylyltransferase, found in Rhizobium etli (strain ATCC 51251 / DSM 11541 / JCM 21823 / NBRC 15573 / CFN 42).